Consider the following 627-residue polypeptide: 1-deoxy-D-xylulose-5-phosphate synthase (627 aa).

Thiamine diphosphate-binding positions include histidine 80 and 121-123; that span reads GHS. Residue aspartate 152 participates in Mg(2+) binding. Thiamine diphosphate is bound by residues 153-154, asparagine 181, tyrosine 288, and glutamate 370; that span reads GA. Asparagine 181 is a binding site for Mg(2+).

This sequence belongs to the transketolase family. DXPS subfamily. As to quaternary structure, homodimer. The cofactor is Mg(2+). Requires thiamine diphosphate as cofactor.

It catalyses the reaction D-glyceraldehyde 3-phosphate + pyruvate + H(+) = 1-deoxy-D-xylulose 5-phosphate + CO2. It participates in metabolic intermediate biosynthesis; 1-deoxy-D-xylulose 5-phosphate biosynthesis; 1-deoxy-D-xylulose 5-phosphate from D-glyceraldehyde 3-phosphate and pyruvate: step 1/1. Catalyzes the acyloin condensation reaction between C atoms 2 and 3 of pyruvate and glyceraldehyde 3-phosphate to yield 1-deoxy-D-xylulose-5-phosphate (DXP). This chain is 1-deoxy-D-xylulose-5-phosphate synthase, found in Aliivibrio fischeri (strain ATCC 700601 / ES114) (Vibrio fischeri).